A 612-amino-acid polypeptide reads, in one-letter code: Dihydroxy-acid dehydratase (612 aa).

Asp81 contributes to the Mg(2+) binding site. Residue Cys122 coordinates [2Fe-2S] cluster. Mg(2+) contacts are provided by Asp123 and Lys124. Position 124 is an N6-carboxylysine (Lys124). Cys193 provides a ligand contact to [2Fe-2S] cluster. Glu489 contacts Mg(2+). The Proton acceptor role is filled by Ser515.

This sequence belongs to the IlvD/Edd family. Homodimer. It depends on [2Fe-2S] cluster as a cofactor. Mg(2+) is required as a cofactor.

The enzyme catalyses (2R)-2,3-dihydroxy-3-methylbutanoate = 3-methyl-2-oxobutanoate + H2O. The catalysed reaction is (2R,3R)-2,3-dihydroxy-3-methylpentanoate = (S)-3-methyl-2-oxopentanoate + H2O. Its pathway is amino-acid biosynthesis; L-isoleucine biosynthesis; L-isoleucine from 2-oxobutanoate: step 3/4. It participates in amino-acid biosynthesis; L-valine biosynthesis; L-valine from pyruvate: step 3/4. Functions in the biosynthesis of branched-chain amino acids. Catalyzes the dehydration of (2R,3R)-2,3-dihydroxy-3-methylpentanoate (2,3-dihydroxy-3-methylvalerate) into 2-oxo-3-methylpentanoate (2-oxo-3-methylvalerate) and of (2R)-2,3-dihydroxy-3-methylbutanoate (2,3-dihydroxyisovalerate) into 2-oxo-3-methylbutanoate (2-oxoisovalerate), the penultimate precursor to L-isoleucine and L-valine, respectively. This chain is Dihydroxy-acid dehydratase, found in Xanthomonas campestris pv. campestris (strain 8004).